The chain runs to 451 residues: Gamma-aminobutyric acid receptor subunit alpha-2 (451 aa).

A signal peptide spans 1-28 (MKTKLNIYNMQFLLFVFLVWDPARLVLA). Topologically, residues 29–249 (NIQEDEAKNN…MTAHFHLKRK (221 aa)) are extracellular. N-linked (GlcNAc...) asparagine glycosylation is present at N38. R94 contacts 4-aminobutanoate. Residue N138 is glycosylated (N-linked (GlcNAc...) asparagine). T157 is a binding site for 4-aminobutanoate. Residues C166 and C180 are joined by a disulfide bond. The chain crosses the membrane as a helical span at residues 250–270 (IGYFVIQTYLPCIMTVILSQV). Over 271 to 280 (SFWLNRESVP) the chain is Cytoplasmic. Residues 281–300 (ARTVFGVTTVLTMTTLSISA) form a helical membrane-spanning segment. Residues 301 to 311 (RNSLPKVAYAT) lie on the Extracellular side of the membrane. Residues 312-332 (AMDWFIAVCYAFVFSALIEFA) form a helical membrane-spanning segment. Residues 333–420 (TVNYFTKRGW…FNSVSKIDRM (88 aa)) are Cytoplasmic-facing. A helical transmembrane segment spans residues 421-441 (SRIVFPVLFGTFNLVYWATYL). Residues 442–451 (NREPVLGVSP) are Extracellular-facing.

It belongs to the ligand-gated ion channel (TC 1.A.9) family. Gamma-aminobutyric acid receptor (TC 1.A.9.5) subfamily. GABRA2 sub-subfamily. In terms of assembly, heteropentamer, formed by a combination of alpha (GABRA1-6), beta (GABRB1-3), gamma (GABRG1-3), delta (GABRD), epsilon (GABRE), rho (GABRR1-3), pi (GABRP) and theta (GABRQ) subunits, each subunit exhibiting distinct physiological and pharmacological properties. Interacts with UBQLN1. Interacts with KIF21B. Interacts with LHFPL4. Interacts with SHISA7; interaction leads to the regulation of GABA(A) receptor trafficking, channel deactivation kinetics and pharmacology. In terms of processing, glycosylated.

The protein resides in the postsynaptic cell membrane. It localises to the cell membrane. It is found in the cytoplasmic vesicle membrane. The protein localises to the cell projection. Its subcellular location is the dendrite. The enzyme catalyses chloride(in) = chloride(out). Activated by pentobarbital. Inhibited by the antagonist bicuculline. Functionally, alpha subunit of the heteropentameric ligand-gated chloride channel gated by gamma-aminobutyric acid (GABA), a major inhibitory neurotransmitter in the brain. GABA-gated chloride channels, also named GABA(A) receptors (GABAAR), consist of five subunits arranged around a central pore and contain GABA active binding site(s) located at the alpha and beta subunit interfaces. When activated by GABA, GABAARs selectively allow the flow of chloride anions across the cell membrane down their electrochemical gradient. Chloride influx into the postsynaptic neuron following GABAAR opening decreases the neuron ability to generate a new action potential, thereby reducing nerve transmission. The alpha-2 subunit exhibits synaptogenic activity together with beta-2 and very little to no activity together with beta-3, the gamma-2 subunit being necessary but not sufficient to induce rapid synaptic contacts formation. In Homo sapiens (Human), this protein is Gamma-aminobutyric acid receptor subunit alpha-2.